Reading from the N-terminus, the 498-residue chain is Calcium-dependent protein kinase 22 (498 aa).

G2 is lipidated: N-myristoyl glycine. The Protein kinase domain occupies Y36 to M305. Residues L42 to T50 and K65 each bind ATP. D164 acts as the Proton acceptor in catalysis. Position 204 is a phosphoserine (S204). An autoinhibitory domain region spans residues A309–I339. 4 EF-hand domains span residues E346–K381, L382–L417, E418–G453, and D454–Q488. Ca(2+) is bound by residues D359, D361, S363, S365, E370, D395, D397, N399, T401, E406, D431, D433, S435, H437, E442, D466, N468, D470, K472, and E477.

It belongs to the protein kinase superfamily. Ser/Thr protein kinase family. CDPK subfamily.

It is found in the membrane. It carries out the reaction L-seryl-[protein] + ATP = O-phospho-L-seryl-[protein] + ADP + H(+). It catalyses the reaction L-threonyl-[protein] + ATP = O-phospho-L-threonyl-[protein] + ADP + H(+). Activated by calcium. Autophosphorylation may play an important role in the regulation of the kinase activity. May play a role in signal transduction pathways that involve calcium as a second messenger. This Arabidopsis thaliana (Mouse-ear cress) protein is Calcium-dependent protein kinase 22 (CPK22).